Reading from the N-terminus, the 31-residue chain is Cytochrome b6-f complex subunit 6 (31 aa).

The chain crosses the membrane as a helical span at residues 3–23; the sequence is LFIGYIIFLVAFFGLATGLFL.

This sequence belongs to the PetL family. In terms of assembly, the 4 large subunits of the cytochrome b6-f complex are cytochrome b6, subunit IV (17 kDa polypeptide, PetD), cytochrome f and the Rieske protein, while the 4 small subunits are PetG, PetL, PetM and PetN. The complex functions as a dimer.

The protein resides in the plastid. The protein localises to the chloroplast thylakoid membrane. In terms of biological role, component of the cytochrome b6-f complex, which mediates electron transfer between photosystem II (PSII) and photosystem I (PSI), cyclic electron flow around PSI, and state transitions. PetL is important for photoautotrophic growth as well as for electron transfer efficiency and stability of the cytochrome b6-f complex. The protein is Cytochrome b6-f complex subunit 6 of Porphyra purpurea (Red seaweed).